The primary structure comprises 126 residues: Aspartate 1-decarboxylase (126 aa).

Ser-25 functions as the Schiff-base intermediate with substrate; via pyruvic acid in the catalytic mechanism. Ser-25 bears the Pyruvic acid (Ser) mark. Substrate is bound at residue Thr-57. The Proton donor role is filled by Tyr-58. 73–75 (GAA) is a substrate binding site.

The protein belongs to the PanD family. In terms of assembly, heterooctamer of four alpha and four beta subunits. It depends on pyruvate as a cofactor. Is synthesized initially as an inactive proenzyme, which is activated by self-cleavage at a specific serine bond to produce a beta-subunit with a hydroxyl group at its C-terminus and an alpha-subunit with a pyruvoyl group at its N-terminus.

The protein resides in the cytoplasm. The catalysed reaction is L-aspartate + H(+) = beta-alanine + CO2. The protein operates within cofactor biosynthesis; (R)-pantothenate biosynthesis; beta-alanine from L-aspartate: step 1/1. Its function is as follows. Catalyzes the pyruvoyl-dependent decarboxylation of aspartate to produce beta-alanine. The polypeptide is Aspartate 1-decarboxylase (Pseudomonas fluorescens).